Reading from the N-terminus, the 78-residue chain is Defensin-like protein 141 (78 aa).

The signal sequence occupies residues M1 to G24. 4 cysteine pairs are disulfide-bonded: C31–C76, C40–C59, C45–C70, and C49–C72.

The protein belongs to the DEFL family.

The protein resides in the secreted. The sequence is that of Defensin-like protein 141 (LCR3) from Arabidopsis thaliana (Mouse-ear cress).